The sequence spans 208 residues: uncharacterized protein (208 aa).

4Fe-4S ferredoxin-type domains are found at residues 59-88, 114-145, 147-176, and 174-203; these read GVLV…SVGT, GDLN…WQQK, GCIT…VNTE, and NTES…IIEW. The [4Fe-4S] cluster site is built by C68, C71, C74, C78, C123, C126, C131, C135, C156, C159, C162, C166, C183, C186, C189, and C193.

This is an uncharacterized protein from Escherichia coli O157:H7.